The primary structure comprises 336 residues: Mitochondrial import receptor subunit TOM40 homolog (336 aa).

The disordered stretch occupies residues 1 to 58; the sequence is MGNVLAASSPAPPAAGSPPAPGLVSVPPGFTMPPVAGLTPTPDKKETQEDRLPNPGTF. The segment covering 10–21 has biased composition (pro residues); sequence PAPPAAGSPPAP. Basic and acidic residues predominate over residues 42-52; sequence PDKKETQEDRL.

Belongs to the Tom40 family. In terms of assembly, forms part of the preprotein translocase complex of the outer mitochondrial membrane (TOM complex). Interacts with mitochondrial targeting sequences.

The protein localises to the mitochondrion outer membrane. In terms of biological role, channel-forming protein essential for import of protein precursors into mitochondria. The sequence is that of Mitochondrial import receptor subunit TOM40 homolog (tomm40) from Xenopus tropicalis (Western clawed frog).